A 450-amino-acid polypeptide reads, in one-letter code: Phosphoglucosamine mutase (450 aa).

Catalysis depends on Ser104, which acts as the Phosphoserine intermediate. Residues Ser104, Asp245, Asp247, and Asp249 each coordinate Mg(2+). Position 104 is a phosphoserine (Ser104).

Belongs to the phosphohexose mutase family. Mg(2+) is required as a cofactor. Activated by phosphorylation.

The enzyme catalyses alpha-D-glucosamine 1-phosphate = D-glucosamine 6-phosphate. Catalyzes the conversion of glucosamine-6-phosphate to glucosamine-1-phosphate. The chain is Phosphoglucosamine mutase from Phenylobacterium zucineum (strain HLK1).